Consider the following 378-residue polypeptide: Probable tRNA sulfurtransferase (378 aa).

The region spanning D51–T153 is the THUMP domain. ATP-binding positions include L171–M172, S196–F197, R253, G275, and Q284.

It belongs to the ThiI family.

The protein localises to the cytoplasm. The catalysed reaction is [ThiI sulfur-carrier protein]-S-sulfanyl-L-cysteine + a uridine in tRNA + 2 reduced [2Fe-2S]-[ferredoxin] + ATP + H(+) = [ThiI sulfur-carrier protein]-L-cysteine + a 4-thiouridine in tRNA + 2 oxidized [2Fe-2S]-[ferredoxin] + AMP + diphosphate. It catalyses the reaction [ThiS sulfur-carrier protein]-C-terminal Gly-Gly-AMP + S-sulfanyl-L-cysteinyl-[cysteine desulfurase] + AH2 = [ThiS sulfur-carrier protein]-C-terminal-Gly-aminoethanethioate + L-cysteinyl-[cysteine desulfurase] + A + AMP + 2 H(+). It functions in the pathway cofactor biosynthesis; thiamine diphosphate biosynthesis. Functionally, catalyzes the ATP-dependent transfer of a sulfur to tRNA to produce 4-thiouridine in position 8 of tRNAs, which functions as a near-UV photosensor. Also catalyzes the transfer of sulfur to the sulfur carrier protein ThiS, forming ThiS-thiocarboxylate. This is a step in the synthesis of thiazole, in the thiamine biosynthesis pathway. The sulfur is donated as persulfide by IscS. In Mycoplasmopsis agalactiae (strain NCTC 10123 / CIP 59.7 / PG2) (Mycoplasma agalactiae), this protein is Probable tRNA sulfurtransferase.